The chain runs to 2016 residues: Cell adhesion molecule Dscam1 (2016 aa).

A signal peptide spans 1–28 (MNMPNERLKWLMLFAAVALIACGSQTLA). The Extracellular segment spans residues 29–1618 (ANPPDADQKG…TIRIILSNLN (1590 aa)). Ig-like C2-type domains lie at 39 to 134 (PVFL…VHVR), 138 to 230 (AQYY…TRLS), 247 to 338 (PKIN…TVLT), 342 to 421 (PLSA…AELK), 428 to 522 (PPVI…AKLN), 527 to 613 (PYIR…LEVQ), 618 to 712 (PQVL…LQVN), 715 to 807 (PRWI…IMIS), and 812 to 904 (PEFT…ASIN). N53 carries an N-linked (GlcNAc...) asparagine glycan. A disulfide bridge links C61 with C117. Positions 144, 146, and 161 each coordinate Zn(2+). 13 disulfide bridges follow: C160/C217, C160/T219, C160/K220, C269/C322, P270/V323, A276/G329, C364/C405, C450/C506, C547/C596, C640/C694, V641/C694, V641/I695, and C736/C790. The N-linked (GlcNAc...) asparagine glycan is linked to N325. Residues N492 and N577 are each glycosylated (N-linked (GlcNAc...) asparagine). N-linked (GlcNAc...) asparagine glycosylation occurs at N820. Residues C833 and C890 are joined by a disulfide bond. 4 consecutive Fibronectin type-III domains span residues 913–1007 (MPYA…TAEE), 1012–1116 (KPQN…TPSQ), 1117–1213 (PPSD…TEPD), and 1217–1310 (APTD…PSDQ). N-linked (GlcNAc...) asparagine glycosylation is found at N1022, N1055, and N1186. The Ig-like C2-type 10 domain maps to 1312-1394 (PAKIASFDDT…ENSIAKDSIT (83 aa)). C1334 and C1382 are disulfide-bonded. Fibronectin type-III domains are found at residues 1402 to 1495 (PPQS…TKGQ) and 1499 to 1594 (LPEK…TGGT). Residues 1619-1639 (LVVPVVAALLVIIIAIIVICI) traverse the membrane as a helical segment. Over 1640-2016 (LRSKGNHHKD…GFTAYDTMAV (377 aa)) the chain is Cytoplasmic. The short motif at 1685 to 1688 (PPVP) is the PXXP motif 1; SH3-binding element. Residues 1688–1719 (PGSNYNTCDRIKRGRGGLRSNHSTWDPRRNPN) are disordered. A PXXP motif 2; SH3-binding motif is present at residues 1727-1730 (PPVP). 2 disordered regions span residues 1787-1846 (GHAG…DDPA) and 1862-2016 (SQGG…TMAV). Polar residues predominate over residues 1826–1836 (KNSQGGQSSIY). A YXXP motif 1; potential SH2-binding motif is present at residues 1842-1845 (YDDP). Residues 1875 to 1878 (YDDP) carry the YXXP motif 2; potential SH2-binding motif. Residues 1897–1918 (GQPYDHYGSRGSMGRRSIGSAR) show a composition bias toward low complexity. The Polyproline tract (probable SH3-binding) signature appears at 1925–1932 (PEPPPPPP). Composition is skewed to basic and acidic residues over residues 1944–1962 (DSKESNEISEAECDRDHGP) and 1974–1993 (QPKDQRTTEEMRKLIERNET). The segment covering 1994 to 2004 (GPKQLQLQQAN) has biased composition (polar residues).

In terms of assembly, homodimer (via extracellular region); alternative splicing produces a potential 19,008 different ectodomains and the majority of these show strong isoform-specific homodimerization. Interacts (via cytoplasmic domain) with dock/dreadlocks (via SH2 and SH3 domains); the interaction is direct and may require Dscam1 to be phosphorylated. Post-translationally, phosphorylated on tyrosine residues in the intracellular domain. Tyrosine protein kinase Src42A and possibly Src64B are involved in this phosphorylation. In terms of processing, glycosylation on Asn-53 and Asn-325 is involved in stabilizing dimerization. Proteolytically processed, probably to generate a secreted form. Secreted into the hemolymph (at protein level). Expressed in brain and eye-antennal imaginal disks, including R3/R4 and R7 photoreceptor cells. Individual R3/R4 cells express between 14 and 50 randomly generated mRNAs encoding distinct isoforms.

The protein resides in the cell membrane. The protein localises to the cell projection. Its subcellular location is the neuron projection. It localises to the axon. It is found in the perikaryon. The protein resides in the dendrite. The protein localises to the secreted. Its function is as follows. Cell surface receptor involved in guidance and targeting of growing nerve axons. Required during Bolwig's organ differentiation for accurate and efficient targeting of photoreceptor neuron axons to their synaptic targets in the brain via the P2 intermediate target neuron. Involved in isoneural self-avoidance during dendrite arborization but not in heteroneural recognition and repulsion during tiling by related neurons of the same class. Involved in regulating axon bifurcation and divergent extension in the developing mushroom body. Essential for axon arborisation in ellipsoid body. Exhibits an extraordinary level of molecular diversity resulting from alternative splicing. Isoforms differing in their ectodomain makeup show a high degree of functional redundancy while isoforms with different transmembrane domains are involved in different neuronal morphogenetic processes and are differentially targeted to dendrites or axons. The vast majority of isoforms exhibit strong isoform-specific homophilic binding. Individual cells express a distinct randomly generated repertoire of isoforms. Cell surfaces bearing identical repertoires of Dscam1 isoforms, such as those from the same cell, trigger recognition and avoidance. A subset of isoforms is expressed in fat body cells and hemocytes, cells that are part of the insect immune response, and these isoforms are secreted into the hemolymph. The secreted form comprising the ectodomain can bind to bacteria, such as Escherichia coli, and may act as an opsonin enhancing their phagocytosis by hemocytes. This Drosophila melanogaster (Fruit fly) protein is Cell adhesion molecule Dscam1.